Here is a 383-residue protein sequence, read N- to C-terminus: Cytochrome b (383 aa).

4 helical membrane passes run 30-50, 74-96, 109-129, and 175-195; these read FGSL…LLAM, WILR…CHIG, TWIV…IGYV, and FFSL…AHLL. The heme b site is built by histidine 80 and histidine 94. Residues histidine 179 and histidine 193 each coordinate heme b. Position 198 (histidine 198) interacts with a ubiquinone. 4 helical membrane passes run 221–241, 289–309, 320–340, and 345–365; these read FTIK…IIGI, GVLA…LDRS, AKFF…IGSA, and EPYV…FLVL.

This sequence belongs to the cytochrome b family. In terms of assembly, the main subunits of complex b-c1 are: cytochrome b, cytochrome c1 and the Rieske protein. The cofactor is heme b.

It is found in the mitochondrion inner membrane. In terms of biological role, component of the ubiquinol-cytochrome c reductase complex (complex III or cytochrome b-c1 complex) that is part of the mitochondrial respiratory chain. The b-c1 complex mediates electron transfer from ubiquinol to cytochrome c. Contributes to the generation of a proton gradient across the mitochondrial membrane that is then used for ATP synthesis. The sequence is that of Cytochrome b (mt:Cyt-b) from Trichoplax adhaerens (Trichoplax reptans).